The primary structure comprises 338 residues: Heat-inducible transcription repressor HrcA (338 aa).

This sequence belongs to the HrcA family.

Functionally, negative regulator of class I heat shock genes (grpE-dnaK-dnaJ and groELS operons). Prevents heat-shock induction of these operons. The polypeptide is Heat-inducible transcription repressor HrcA (Nitrosomonas eutropha (strain DSM 101675 / C91 / Nm57)).